Reading from the N-terminus, the 226-residue chain is PKHD-type hydroxylase MADE_1018490 (226 aa).

The Fe2OG dioxygenase domain occupies 77–177 (RIFPPCFNRY…RIAAITWIQS (101 aa)). 3 residues coordinate Fe cation: H95, D97, and H158. Residue R168 participates in 2-oxoglutarate binding.

Requires Fe(2+) as cofactor. L-ascorbate is required as a cofactor.

This is PKHD-type hydroxylase MADE_1018490 from Alteromonas mediterranea (strain DSM 17117 / CIP 110805 / LMG 28347 / Deep ecotype).